A 227-amino-acid chain; its full sequence is Orotate phosphoribosyltransferase (227 aa).

5-phospho-alpha-D-ribose 1-diphosphate is bound by residues Lys-51, Arg-119, Lys-120, and Lys-123. Orotate is bound by residues Thr-149 and Arg-177.

This sequence belongs to the purine/pyrimidine phosphoribosyltransferase family. PyrE subfamily. As to quaternary structure, homodimer. As to expression, expressed in body wall muscles, spermatheca and vulva muscles.

The enzyme catalyses orotidine 5'-phosphate + diphosphate = orotate + 5-phospho-alpha-D-ribose 1-diphosphate. It carries out the reaction UMP + diphosphate = 5-phospho-alpha-D-ribose 1-diphosphate + uracil. The protein operates within pyrimidine metabolism; UMP biosynthesis via de novo pathway; UMP from orotate: step 1/2. Its pathway is pyrimidine metabolism; UMP biosynthesis via salvage pathway; UMP from uracil: step 1/1. In terms of biological role, phosphoribosyltransferase which catalyzes the formation of UMP from uracil in vitro and thus may be involved in UMP biosynthesis via the salvage pathway. May also participate in the first step of UMP synthesis by catalyzing the formation of orotidine 5'-phosphate, a UMP precursor, from orotate. This Caenorhabditis elegans protein is Orotate phosphoribosyltransferase.